The chain runs to 274 residues: 3-methyl-2-oxobutanoate hydroxymethyltransferase (274 aa).

D50 and D89 together coordinate Mg(2+). Residues 50 to 51, D89, and K119 contribute to the 3-methyl-2-oxobutanoate site; that span reads DS. Residue E121 coordinates Mg(2+). Catalysis depends on E188, which acts as the Proton acceptor.

It belongs to the PanB family. As to quaternary structure, homodecamer; pentamer of dimers. The cofactor is Mg(2+).

It localises to the cytoplasm. The enzyme catalyses 3-methyl-2-oxobutanoate + (6R)-5,10-methylene-5,6,7,8-tetrahydrofolate + H2O = 2-dehydropantoate + (6S)-5,6,7,8-tetrahydrofolate. The protein operates within cofactor biosynthesis; (R)-pantothenate biosynthesis; (R)-pantoate from 3-methyl-2-oxobutanoate: step 1/2. Functionally, catalyzes the reversible reaction in which hydroxymethyl group from 5,10-methylenetetrahydrofolate is transferred onto alpha-ketoisovalerate to form ketopantoate. The sequence is that of 3-methyl-2-oxobutanoate hydroxymethyltransferase from Methylorubrum populi (strain ATCC BAA-705 / NCIMB 13946 / BJ001) (Methylobacterium populi).